Here is a 465-residue protein sequence, read N- to C-terminus: Phosphomannomutase/phosphoglucomutase (465 aa).

Ser110 serves as the catalytic Phosphoserine intermediate. Residues Ser110, Asp244, Asp246, and Asp248 each contribute to the Mg(2+) site. Residues Glu327, Ser329, and His331 each coordinate substrate.

Belongs to the phosphohexose mutase family. As to quaternary structure, monomer. Mg(2+) is required as a cofactor.

It catalyses the reaction alpha-D-mannose 1-phosphate = D-mannose 6-phosphate. It carries out the reaction alpha-D-glucose 1-phosphate = alpha-D-glucose 6-phosphate. The protein operates within nucleotide-sugar biosynthesis; GDP-alpha-D-mannose biosynthesis; alpha-D-mannose 1-phosphate from D-fructose 6-phosphate: step 2/2. It functions in the pathway bacterial outer membrane biogenesis; lipopolysaccharide biosynthesis. Functionally, the phosphomannomutase activity produces a precursor for alginate polymerization. The alginate layer causes a mucoid phenotype and provides a protective barrier against host immune defenses and antibiotics. Also involved in core-LPS biosynthesis due to its phosphoglucomutase activity. Essential for biofilm production. In Pseudomonas syringae pv. tomato (strain ATCC BAA-871 / DC3000), this protein is Phosphomannomutase/phosphoglucomutase (algC).